Here is a 145-residue protein sequence, read N- to C-terminus: Peptide methionine sulfoxide reductase MsrB (145 aa).

In terms of domain architecture, MsrB spans 6–129 (KNERLQQLTD…NSAALRFIPV (124 aa)). The active-site Nucleophile is the cysteine 118.

Belongs to the MsrB Met sulfoxide reductase family.

The catalysed reaction is L-methionyl-[protein] + [thioredoxin]-disulfide + H2O = L-methionyl-(R)-S-oxide-[protein] + [thioredoxin]-dithiol. This Listeria monocytogenes serotype 4a (strain HCC23) protein is Peptide methionine sulfoxide reductase MsrB.